We begin with the raw amino-acid sequence, 311 residues long: Thioredoxin reductase (311 aa).

Residue 35-42 participates in FAD binding; it reads ERGIPGGQ. The cysteines at positions 134 and 137 are disulfide-linked. 277–286 serves as a coordination point for FAD; the sequence is DVRDKGLRQI.

It belongs to the class-II pyridine nucleotide-disulfide oxidoreductase family. Homodimer. It depends on FAD as a cofactor.

The protein resides in the cytoplasm. It catalyses the reaction [thioredoxin]-dithiol + NADP(+) = [thioredoxin]-disulfide + NADPH + H(+). This Staphylococcus aureus (strain MRSA252) protein is Thioredoxin reductase (trxB).